Here is a 524-residue protein sequence, read N- to C-terminus: Glycoprotein (524 aa).

The N-terminal stretch at 1 to 19 (MVPQALLLVPILGFSSCFG) is a signal peptide. Over 20 to 459 (KFPIYTIPDT…DLGLPNWGEY (440 aa)) the chain is Virion surface. 6 cysteine pairs are disulfide-bonded: Cys-43–Cys-302, Cys-54–Cys-226, Cys-80–Cys-113, Cys-178–Cys-188, Cys-208–Cys-247, and Cys-242–Cys-271. An N-linked (GlcNAc...) asparagine; by host glycan is attached at Asn-56. Asn-266 and Asn-338 each carry an N-linked (GlcNAc...) asparagine; by host glycan. Residues Cys-363 and Cys-370 are joined by a disulfide bond. Residues 460-480 (VLLSAGTLIALMLIIFLMTCC) form a helical membrane-spanning segment. Cys-480 carries S-palmitoyl cysteine; by host lipidation. The Intravirion segment spans residues 481–524 (RKVDRPESTQRSLRGTGRNVSVTSQSGKFIPSWESYKSGGETGL).

It belongs to the lyssavirus glycoprotein family. Homotrimer. Interacts with matrix protein. Interacts with host TRFC. Interacts with host BST2; this interaction inhibits viral budding by tethering new virions to the cell surface. Interacts with ITGB1. Interacts with host GRM2. Post-translationally, glycosylated and palmitoylated by host. Glycosylation is crucial for glycoprotein export at the cell surface.

It localises to the virion membrane. In terms of biological role, attaches the virus to host cellular receptor, inducing endocytosis of the virion by using different host proteins including TFRC, GRM2 and ITGB1. In the endosome, the acidic pH induces conformational changes in the glycoprotein trimer, which trigger fusion between virus and cell membrane. There is convincing in vitro evidence that the muscular form of the nicotinic acetylcholine receptor (nAChR), the neuronal cell adhesion molecule (NCAM), and the p75 neurotrophin receptor (p75NTR) bind glycoprotein and thereby facilitate rabies virus entry into cells. The chain is Glycoprotein (G) from Rabies virus (strain Nishigahara RCEH) (RABV).